Here is a 1072-residue protein sequence, read N- to C-terminus: DNA-directed RNA polymerase subunit beta (1072 aa).

Belongs to the RNA polymerase beta chain family. In plastids the minimal PEP RNA polymerase catalytic core is composed of four subunits: alpha, beta, beta', and beta''. When a (nuclear-encoded) sigma factor is associated with the core the holoenzyme is formed, which can initiate transcription.

The protein resides in the plastid. It is found in the chloroplast. It catalyses the reaction RNA(n) + a ribonucleoside 5'-triphosphate = RNA(n+1) + diphosphate. Functionally, DNA-dependent RNA polymerase catalyzes the transcription of DNA into RNA using the four ribonucleoside triphosphates as substrates. The sequence is that of DNA-directed RNA polymerase subunit beta from Arabidopsis thaliana (Mouse-ear cress).